The following is a 296-amino-acid chain: Probable lipid kinase YegS-like (296 aa).

Positions 1-130 (MPHTLLILNG…IDLAQVNGEH (130 aa)) constitute a DAGKc domain. ATP-binding positions include T37, 63–69 (GDGTINE), and T92. 3 residues coordinate Mg(2+): L212, D215, and L217. The Proton acceptor role is filled by E268.

Belongs to the diacylglycerol/lipid kinase family. YegS lipid kinase subfamily. Mg(2+) serves as cofactor. The cofactor is Ca(2+).

The protein resides in the cytoplasm. Its function is as follows. Probably phosphorylates lipids; the in vivo substrate is unknown. The protein is Probable lipid kinase YegS-like of Yersinia pseudotuberculosis serotype I (strain IP32953).